A 298-amino-acid polypeptide reads, in one-letter code: Mitochondrial substrate carrier family protein N (298 aa).

The Mitochondrial intermembrane portion of the chain corresponds to 1 to 13 (MAGDLTPSLFLKY). Solcar repeat units lie at residues 8 to 92 (SLFL…FKKT), 104 to 188 (FRIP…TAEN), and 207 to 290 (QKLS…IKQM). The chain crosses the membrane as a helical span at residues 14 to 34 (GFGGALSCSITHSLVVPLDVV). Residues 35 to 60 (KTLLQTNPGKYTGMMNGFSTVIKEQG) lie on the Mitochondrial matrix side of the membrane. A helical membrane pass occupies residues 61–81 (PSGLLQGLGPTAVGYALQGFL). Residues 82–105 (KFGFYEVFKKTYADAVGEKADQFR) lie on the Mitochondrial intermembrane side of the membrane. Residues 106–126 (IPIWLAASATAEVIADIALCP) form a helical membrane-spanning segment. At 127–162 (NEAVRIRLVAEPTFAKSPVEAFGKIFKQEGVLGFYK) the chain is on the mitochondrial matrix side. A helical membrane pass occupies residues 163–179 (GLPPILLKQVPYTMAKF). At 180-208 (AVFEFTAENVYKGLAASGKPKESLTDGQK) the chain is on the mitochondrial intermembrane side. The chain crosses the membrane as a helical span at residues 209–229 (LSVSLGSGIVAGIVAAIVSQP). At 230-262 (ADTILSKINQEKTDGGVVKAIGNIMRRLGVRGL) the chain is on the mitochondrial matrix side. A helical membrane pass occupies residues 263 to 283 (FLGLPTRCFMVGTLTAGQFFI). Over 284 to 298 (YDGIKQMLGLTPAKK) the chain is Mitochondrial intermembrane.

The protein belongs to the mitochondrial carrier (TC 2.A.29) family.

It localises to the mitochondrion inner membrane. Its function is as follows. Mitochondrial solute carriers shuttle metabolites, nucleotides, and cofactors through the mitochondrial inner membrane. Transports phosphate groups from the cytosol to the mitochondrial matrix. Phosphate is cotransported with H(+). The protein is Mitochondrial substrate carrier family protein N (mcfN) of Dictyostelium discoideum (Social amoeba).